Reading from the N-terminus, the 325-residue chain is Chain length determinant protein (325 aa).

The Cytoplasmic portion of the chain corresponds to 1–31; it reads MRVENNNVSGQNHDPEQIDLIDLLVQLWRGK. The helical transmembrane segment at 32–52 threads the bilayer; it reads MTIIISVIVAIALAIGYLAVA. Over 53 to 294 the chain is Periplasmic; the sequence is KEKWTSTAII…LPIRRDSPKK (242 aa). Residues 295 to 315 traverse the membrane as a helical segment; that stretch reads AITLILAVLLGGMVGAGIVLG. At 316–325 the chain is on the cytoplasmic side; it reads RNALRNYNAK.

It belongs to the WzzB/Cld/Rol family.

The protein resides in the cell inner membrane. It participates in bacterial outer membrane biogenesis; lipopolysaccharide biosynthesis. Functionally, confers a modal distribution of chain length on the O-antigen component of lipopolysaccharide (LPS). Gives rise to a reduced number of short chain molecules and increases in numbers of longer molecules. The polypeptide is Chain length determinant protein (wzzB) (Shigella flexneri).